Consider the following 256-residue polypeptide: MGRVIRAQRKGAGSVFKAHVKKRKGAAKLRSLDFAERSGYIRGVVKDIIHDPGRGAPLAVVHFRDPYRYKIRKELFIAPEGMHTGQFVYCGRKATLQIGNVMPLSQMPEGTIICNLEEKTGDRGRLARTSGNYATVIAHNQDTKKTRVKLPSGAKKVVPSANRAMVGIVAGGGRIDKPILKAGRAYHKYKVKRNSWPKVRGVAMNPVEHPHGGGNHQHIGKASTVKRGTSAGRKVGLIAARRTGRIRGGKGDSKDK.

Residues 208-230 (EHPHGGGNHQHIGKASTVKRGTS) form a disordered region.

Belongs to the universal ribosomal protein uL2 family. As to expression, in larvae tissues examined: gut, brain imaginal disk, salivary glands, fat body, muscles, epidermis and trachaea.

Its subcellular location is the cytoplasm. The chain is Large ribosomal subunit protein uL2 (RpL8) from Drosophila melanogaster (Fruit fly).